The primary structure comprises 87 residues: Insertion element IS407 uncharacterized 10.0 kDa protein (87 aa).

Belongs to the transposase 8 family.

This chain is Insertion element IS407 uncharacterized 10.0 kDa protein, found in Burkholderia multivorans (strain ATCC 17616 / 249).